We begin with the raw amino-acid sequence, 348 residues long: uncharacterized protein (348 aa).

The span at 1-11 (MTNPQGPPNDP) shows a compositional bias: pro residues. The tract at residues 1-83 (MTNPQGPPND…RSGRQAAHQA (83 aa)) is disordered. The next 2 membrane-spanning stretches (helical) occupy residues 111–131 (LTVF…LIGG) and 235–255 (IPIL…DGTV).

It localises to the cell membrane. This is an uncharacterized protein from Mycobacterium tuberculosis (strain CDC 1551 / Oshkosh).